A 214-amino-acid chain; its full sequence is uncharacterized protein (214 aa).

4 helical membrane-spanning segments follow: residues 10–30 (IPPLAVYLLVSGVVGVESLGI), 55–75 (IGVGVVAVIGAAVGDSIGYAI), 147–167 (VSGAICWAGGTTALVYFAGMA), and 174–194 (RFSWIALIITVVVGIIAAILL).

Belongs to the DedA family.

The protein resides in the cell membrane. This is an uncharacterized protein from Mycobacterium leprae (strain TN).